Consider the following 126-residue polypeptide: Large ribosomal subunit protein eL8 (126 aa).

The protein belongs to the eukaryotic ribosomal protein eL8 family. As to quaternary structure, part of the 50S ribosomal subunit. Probably part of the RNase P complex.

Its subcellular location is the cytoplasm. Its function is as follows. Multifunctional RNA-binding protein that recognizes the K-turn motif in ribosomal RNA, the RNA component of RNase P, box H/ACA, box C/D and box C'/D' sRNAs. This is Large ribosomal subunit protein eL8 from Sulfolobus acidocaldarius (strain ATCC 33909 / DSM 639 / JCM 8929 / NBRC 15157 / NCIMB 11770).